The primary structure comprises 185 residues: Small ribosomal subunit protein uS4 (185 aa).

The region spanning 108–170 (RRLQTLVYRK…GKSPFVDASH (63 aa)) is the S4 RNA-binding domain.

Belongs to the universal ribosomal protein uS4 family. Part of the 30S ribosomal subunit. Contacts protein S5. The interaction surface between S4 and S5 is involved in control of translational fidelity.

One of the primary rRNA binding proteins, it binds directly to 16S rRNA where it nucleates assembly of the body of the 30S subunit. In terms of biological role, with S5 and S12 plays an important role in translational accuracy. This Methanoregula boonei (strain DSM 21154 / JCM 14090 / 6A8) protein is Small ribosomal subunit protein uS4.